A 209-amino-acid polypeptide reads, in one-letter code: MKKAILGKKLGMTQIFNENGRVIPVTVIEAGPCVVVQKKTEEKDGYKSIQIGFGDIREKLVNKPLKGHFAKSGVSLKRFLKEFKVDNIDEYEVGQEIKADIFAEGDRIDVSGISKGKGFQGVIRRWNAQRGPMSHGSKFHRAVGSMGASSDPSRTFKNKKMPGHMGNKNTTVLNLQVAKVIPEKNIILIKGGVPGPNKSFVSIKDTVKA.

The interval 130–154 (RGPMSHGSKFHRAVGSMGASSDPSR) is disordered.

This sequence belongs to the universal ribosomal protein uL3 family. In terms of assembly, part of the 50S ribosomal subunit. Forms a cluster with proteins L14 and L19.

Functionally, one of the primary rRNA binding proteins, it binds directly near the 3'-end of the 23S rRNA, where it nucleates assembly of the 50S subunit. This Clostridium kluyveri (strain NBRC 12016) protein is Large ribosomal subunit protein uL3.